The following is a 166-amino-acid chain: Interferon gamma (166 aa).

The first 23 residues, 1–23 (MNYTSYILAFQLCVILGSSGCYC), serve as a signal peptide directing secretion. Position 24 is a pyrrolidone carboxylic acid (Q24). 2 N-linked (GlcNAc...) asparagine glycosylation sites follow: N39 and N106. A disordered region spans residues 147–166 (SNLRKRKRRQNQIQGRRASK).

This sequence belongs to the type II (or gamma) interferon family. In terms of assembly, homodimer. Interacts with IFNGR1 (via extracellular domain); this interaction promotes IFNGR1 dimerization. As to expression, released primarily from activated T lymphocytes.

It localises to the secreted. Its function is as follows. Type II interferon produced by immune cells such as T-cells and NK cells that plays crucial roles in antimicrobial, antiviral, and antitumor responses by activating effector immune cells and enhancing antigen presentation. Primarily signals through the JAK-STAT pathway after interaction with its receptor IFNGR1 to affect gene regulation. Upon IFNG binding, IFNGR1 intracellular domain opens out to allow association of downstream signaling components JAK2, JAK1 and STAT1, leading to STAT1 activation, nuclear translocation and transcription of IFNG-regulated genes. Many of the induced genes are transcription factors such as IRF1 that are able to further drive regulation of a next wave of transcription. Plays a role in class I antigen presentation pathway by inducing a replacement of catalytic proteasome subunits with immunoproteasome subunits. In turn, increases the quantity, quality, and repertoire of peptides for class I MHC loading. Increases the efficiency of peptide generation also by inducing the expression of activator PA28 that associates with the proteasome and alters its proteolytic cleavage preference. Up-regulates as well MHC II complexes on the cell surface by promoting expression of several key molecules such as cathepsins B/CTSB, H/CTSH, and L/CTSL. Participates in the regulation of hematopoietic stem cells during development and under homeostatic conditions by affecting their development, quiescence, and differentiation. In Lama glama (Llama), this protein is Interferon gamma (IFNG).